We begin with the raw amino-acid sequence, 417 residues long: FAD-dependent monooxygenase aptC (417 aa).

Residues 1-18 (MTLPVLIIGAGLSGLTTA) form the signal peptide. FAD is bound by residues E32, A43, R117, D332, and G345.

This sequence belongs to the paxM FAD-dependent monooxygenase family. Requires FAD as cofactor.

The enzyme catalyses 3,6,8,9-tetrahydroxy-1-oxo-3-(2-oxopropyl)-1,2,3,4-tetrahydroanthracene-2-carboxyl-[ACP] + NADPH + O2 + H(+) = 2,3,6,8,9-pentahydroxy-1-oxo-3-(2-oxopropyl)-1,2,3,4-tetrahydroanthracene-2-carboxyl-[ACP] + NADP(+) + H2O. It functions in the pathway secondary metabolite biosynthesis. In terms of biological role, FAD-dependent monooxygenase; part of the gene cluster that mediates the biosynthesis of asperthecin, an anthraquinone pigment. Polyketide synthase (PKS) aptA catalyzes the formation of the aromatic polyketide from acetyl coenzyme A and seven malonyl coenzyme A molecules. Polyketide is subsequently hydrolyzed by the action of the hydrolase aptB into endocrocin-9-anthrone. Endocrocin-9-anthrone is then oxidized into endocrocin by the monooxygenase aptC. Endocrocin is likely to decarboxylate spontaneously to form emodin which explains why there is no decarboxylase in the asperthecin biosynthesis cluster. Finally, aptC or another endogenous oxygenase catalyzes additional oxidation steps to form asperthecin. In Emericella nidulans (strain FGSC A4 / ATCC 38163 / CBS 112.46 / NRRL 194 / M139) (Aspergillus nidulans), this protein is FAD-dependent monooxygenase aptC.